Consider the following 354-residue polypeptide: Acyl-CoA-binding domain-containing protein 2 (354 aa).

The chain crosses the membrane as a helical; Signal-anchor span at residues 11-31; sequence VILGLIFSYLLAKLISIVVTF. Positions 75-96 are disordered; it reads AEQGSSRSDSVAGDDSEEDDDW. The segment covering 86–96 has biased composition (acidic residues); it reads AGDDSEEDDDW. Residues 104 to 194 enclose the ACB domain; that stretch reads LDEAFSAATL…VTQLYPTWLD (91 aa). Residues 136 to 140, K162, and Y181 each bind an acyl-CoA; that span reads YGLYK. 2 ANK repeats span residues 265-294 and 298-327; these read EGRTPLHWAIDRGHLNIAKVLVDKNADVNA and EGQTPLHYAVVCDREAIAEFLVKQNANTAA.

This sequence belongs to the ACBP family. As to quaternary structure, interacts (via ankyrin repeats) with HIPP26 and the ethylene-responsive element-binding proteins RAP2-3/EBP and RAP2-12. Interacts with CSE. In terms of tissue distribution, mostly expressed in roots and flowers, and, to a lower extent, in stems, pods and leaves (at protein level).

It is found in the cell membrane. It localises to the endoplasmic reticulum membrane. The protein localises to the peroxisome membrane. Its function is as follows. Binds medium- and long-chain acyl-CoA esters with very high affinity. Can interact in vitro with palmitoyl-CoA, but not with oleoyl-CoA. Binds to lead ions (Pb). May function as an intracellular carrier of acyl-CoA esters. Required for proper phospholipid and, to a lower extent, galactolipid composition. The sequence is that of Acyl-CoA-binding domain-containing protein 2 (ACBP2) from Arabidopsis thaliana (Mouse-ear cress).